The primary structure comprises 414 residues: tRNA N6-adenosine threonylcarbamoyltransferase, mitochondrial (414 aa).

The transit peptide at 1 to 29 (MLMLRRTAGAIPKPPKSKVYGFLRRFSVH) directs the protein to the mitochondrion. N6-acetyllysine occurs at positions 74 and 140. A divalent metal cation-binding residues include H147 and H151. Substrate is bound by residues 169–173 (LISGG) and D202. At K203 the chain carries N6-acetyllysine. Residues G222 and E226 each coordinate substrate. Residues K230 and K299 each carry the N6-acetyllysine modification. Substrate is bound by residues 329 to 330 (SN) and T357. D358 is a binding site for a divalent metal cation.

It belongs to the KAE1 / TsaD family. As to quaternary structure, monomer. Requires a divalent metal cation as cofactor.

It localises to the mitochondrion. It catalyses the reaction L-threonylcarbamoyladenylate + adenosine(37) in tRNA = N(6)-L-threonylcarbamoyladenosine(37) in tRNA + AMP + H(+). In terms of biological role, required for the formation of a threonylcarbamoyl group on adenosine at position 37 (t(6)A37) in mitochondrial tRNAs that read codons beginning with adenine. Probably involved in the transfer of the threonylcarbamoyl moiety of threonylcarbamoyl-AMP (TC-AMP) to the N6 group of A37. Involved in mitochondrial genome maintenance. This chain is tRNA N6-adenosine threonylcarbamoyltransferase, mitochondrial, found in Mus musculus (Mouse).